The primary structure comprises 353 residues: Lipase-specific foldase (353 aa).

The Cytoplasmic portion of the chain corresponds to 1–19 (MAQADRPARGGLAARPMRG). A helical membrane pass occupies residues 20–40 (ASFALAGLVACAACAAVVLWL). Topologically, residues 41 to 353 (RPAAPSPAPA…AASLDRGAGG (313 aa)) are periplasmic.

This sequence belongs to the lipase chaperone family. As to quaternary structure, monomer. Interacts with lipase (lip).

It is found in the cell inner membrane. Functionally, involved in the folding of the extracellular lipase (lip) during its passage through the periplasm. In Burkholderia plantarii, this protein is Lipase-specific foldase.